The chain runs to 155 residues: 6,7-dimethyl-8-ribityllumazine synthase (155 aa).

Residues Phe-24, 58 to 60 (AFE), and 82 to 84 (VII) each bind 5-amino-6-(D-ribitylamino)uracil. A (2S)-2-hydroxy-3-oxobutyl phosphate-binding site is contributed by 87-88 (ST). The active-site Proton donor is His-90. Phe-115 is a binding site for 5-amino-6-(D-ribitylamino)uracil. Arg-129 provides a ligand contact to (2S)-2-hydroxy-3-oxobutyl phosphate.

Belongs to the DMRL synthase family.

The catalysed reaction is (2S)-2-hydroxy-3-oxobutyl phosphate + 5-amino-6-(D-ribitylamino)uracil = 6,7-dimethyl-8-(1-D-ribityl)lumazine + phosphate + 2 H2O + H(+). It functions in the pathway cofactor biosynthesis; riboflavin biosynthesis; riboflavin from 2-hydroxy-3-oxobutyl phosphate and 5-amino-6-(D-ribitylamino)uracil: step 1/2. Its function is as follows. Catalyzes the formation of 6,7-dimethyl-8-ribityllumazine by condensation of 5-amino-6-(D-ribitylamino)uracil with 3,4-dihydroxy-2-butanone 4-phosphate. This is the penultimate step in the biosynthesis of riboflavin. This is 6,7-dimethyl-8-ribityllumazine synthase from Chlorobium limicola (strain DSM 245 / NBRC 103803 / 6330).